A 262-amino-acid polypeptide reads, in one-letter code: MAHLLEKTRKITSILKRSEEQLQEELPYNDITRQLAEIMDCNACIVNSKGRLLGYFMRYKTNNDRVEAFYQTKMFPDDYIRSANLIYDTEANLPVEHELSIFPVETQSDFPDGLTTIAPIHVSGIRLGSLIIWRNDEKFDNDDLVLVEISSTVVGIQLLNFQREEDEKNIRRRTAVTMAVNTLSYSELRAVSAILGELNGNEGHLTASVIADRIGITRSVIVNALRKLESAGIIESRSLGMKGTYLKVLIPDVFEEIKKRDY.

Residues 1 to 159 form a GAF domain region; that stretch reads MAHLLEKTRK…SSTVVGIQLL (159 aa). A DNA-binding region (H-T-H motif) is located at residues 207-226; the sequence is ASVIADRIGITRSVIVNALR.

The protein belongs to the CodY family.

Its subcellular location is the cytoplasm. Its function is as follows. DNA-binding global transcriptional regulator which is involved in the adaptive response to starvation and acts by directly or indirectly controlling the expression of numerous genes in response to nutrient availability. During rapid exponential growth, CodY is highly active and represses genes whose products allow adaptation to nutrient depletion. This Streptococcus gordonii (strain Challis / ATCC 35105 / BCRC 15272 / CH1 / DL1 / V288) protein is Global transcriptional regulator CodY.